Reading from the N-terminus, the 475-residue chain is Cytochrome P450 monooxygenase sthD (475 aa).

The N-terminal stretch at Met1–Arg17 is a signal peptide. A helical transmembrane segment spans residues Phe276–Leu296. Asn336 is a glycosylation site (N-linked (GlcNAc...) asparagine). Residue Cys418 participates in heme binding.

It belongs to the cytochrome P450 family. Requires heme as cofactor.

It localises to the membrane. The catalysed reaction is betaenone A + NADPH + O2 + H(+) = stemphyloxin II + NADP(+) + H2O. The enzyme catalyses betaenone C + NADPH + O2 + H(+) = stemphyloxin I + NADP(+) + H2O. Its pathway is mycotoxin biosynthesis. Its function is as follows. Cytochrome P450 monooxygenase; part of the gene cluster that mediates the biosynthesis of the phytotoxin stemphyloxin II. The first step of the pathway is the synthesis of dehydroprobetaenone I by the polyketide synthase sthA and the enoyl reductase sthE via condensation of one acetyl-CoA starter unit with 7 malonyl-CoA units and 5 methylations. The C-terminal reductase (R) domain of sthA catalyzes the reductive release of the polyketide chain. Because sthA lacks a designated enoylreductase (ER) domain, the required activity is provided the enoyl reductase sthE. The short-chain dehydrogenase/reductase sthC then catalyzes reduction of dehydroprobetaenone I to probetaenone I. The cytochrome P450 monooxygenase sthF catalyzes successive epoxidation, oxidation (resulting from epoxide opening) and hydroxylation to install a tertiary alcohol in the decaline ring to yield betaenone C from dehydroprobetaenone I and betaenone B from probetaenone I. The FAD-linked oxidoreductase sthB is responsible for the conversion of betaenone C to betaenone A via an intramolecular aldol reaction between C-1 and C-17 to form the bridged tricyclic system in betaenone A. Finally, the cytochrome P450 monooxygenase sthD catalyzes the hydroxylation of C-15 to afford the final metabolite stemphyloxin II. The polypeptide is Cytochrome P450 monooxygenase sthD (Phaeosphaeria nodorum (strain SN15 / ATCC MYA-4574 / FGSC 10173) (Glume blotch fungus)).